Reading from the N-terminus, the 358-residue chain is Protein FAM50 homolog (358 aa).

The span at 104 to 113 (AKLAEKDRQK) shows a compositional bias: basic and acidic residues. The tract at residues 104–151 (AKLAEKDRQKRQIQALSFDPDDEPDGDDANDGDEGSGKESEKEDVKEE) is disordered. Positions 122–137 (DPDDEPDGDDANDGDE) are enriched in acidic residues. The segment covering 138–151 (GSGKESEKEDVKEE) has biased composition (basic and acidic residues).

This sequence belongs to the FAM50 family.

This Anopheles gambiae (African malaria mosquito) protein is Protein FAM50 homolog.